We begin with the raw amino-acid sequence, 101 residues long: Large ribosomal subunit protein uL24 (101 aa).

The protein belongs to the universal ribosomal protein uL24 family. As to quaternary structure, part of the 50S ribosomal subunit.

Its function is as follows. One of two assembly initiator proteins, it binds directly to the 5'-end of the 23S rRNA, where it nucleates assembly of the 50S subunit. Functionally, one of the proteins that surrounds the polypeptide exit tunnel on the outside of the subunit. This Streptococcus sanguinis (strain SK36) protein is Large ribosomal subunit protein uL24.